Here is a 160-residue protein sequence, read N- to C-terminus: Protein-export protein SecB (160 aa).

It belongs to the SecB family. Homotetramer, a dimer of dimers. One homotetramer interacts with 1 SecA dimer.

The protein localises to the cytoplasm. In terms of biological role, one of the proteins required for the normal export of preproteins out of the cell cytoplasm. It is a molecular chaperone that binds to a subset of precursor proteins, maintaining them in a translocation-competent state. It also specifically binds to its receptor SecA. The polypeptide is Protein-export protein SecB (Burkholderia lata (strain ATCC 17760 / DSM 23089 / LMG 22485 / NCIMB 9086 / R18194 / 383)).